The primary structure comprises 215 residues: Histone H1.1 (215 aa).

A disordered region spans residues 1 to 43 (MSETVPPAPAASAAPEKPLAGKKAKKPAKAAAASKKKPAGPSV). S2 carries the N-acetylserine modification. Phosphoserine occurs at positions 2 and 12. Position 17 is an N6-acetyllysine (K17). Residues 20 to 38 (AGKKAKKPAKAAAASKKKP) are compositionally biased toward basic residues. Position 37 is an N6-(beta-hydroxybutyryl)lysine (K37). In terms of domain architecture, H15 spans 39–112 (AGPSVSELIV…GASGSFKLNK (74 aa)). Position 44 is a phosphoserine (S44). Position 55 is an N6-(beta-hydroxybutyryl)lysine (K55). The residue at position 57 (R57) is a Citrulline. Residue K67 is modified to N6-(beta-hydroxybutyryl)lysine. The residue at position 78 (K78) is an N6-acetyllysine. At K88 the chain carries N6-(beta-hydroxybutyryl)lysine. K93 bears the N6-(beta-hydroxybutyryl)lysine; alternate mark. The residue at position 93 (K93) is an N6-acetyllysine; alternate. Residues 94-215 (GTLVQTKGTG…KPKKAAPKKK (122 aa)) form a disordered region. Position 107 is a phosphoserine (S107). An N6-(beta-hydroxybutyryl)lysine modification is found at K109. A compositionally biased stretch (low complexity) spans 122 to 147 (GASKVATKTKATGASKKLKKATGASK). K125 bears the N6-acetyllysine mark. Composition is skewed to basic residues over residues 148–181 (KSVK…KKVA) and 188–215 (KAVK…PKKK). T204 carries the post-translational modification Phosphothreonine.

This sequence belongs to the histone H1/H5 family. In terms of assembly, interacts with DFFB. H1 histones are progressively phosphorylated during the cell cycle, becoming maximally phosphorylated during late G2 phase and M phase, and being dephosphorylated sharply thereafter. Post-translationally, citrullination at Arg-57 (H1R54ci) by PADI4 takes place within the DNA-binding site of H1 and results in its displacement from chromatin and global chromatin decondensation, thereby promoting pluripotency and stem cell maintenance.

The protein localises to the nucleus. It is found in the chromosome. Histone H1 protein binds to linker DNA between nucleosomes forming the macromolecular structure known as the chromatin fiber. Histones H1 are necessary for the condensation of nucleosome chains into higher-order structured fibers. Also acts as a regulator of individual gene transcription through chromatin remodeling, nucleosome spacing and DNA methylation. This chain is Histone H1.1, found in Homo sapiens (Human).